Consider the following 193-residue polypeptide: ATP-dependent Clp protease proteolytic subunit (193 aa).

The Nucleophile role is filled by Ser-98. The active site involves His-123.

The protein belongs to the peptidase S14 family. Fourteen ClpP subunits assemble into 2 heptameric rings which stack back to back to give a disk-like structure with a central cavity, resembling the structure of eukaryotic proteasomes.

It is found in the cytoplasm. The catalysed reaction is Hydrolysis of proteins to small peptides in the presence of ATP and magnesium. alpha-casein is the usual test substrate. In the absence of ATP, only oligopeptides shorter than five residues are hydrolyzed (such as succinyl-Leu-Tyr-|-NHMec, and Leu-Tyr-Leu-|-Tyr-Trp, in which cleavage of the -Tyr-|-Leu- and -Tyr-|-Trp bonds also occurs).. In terms of biological role, cleaves peptides in various proteins in a process that requires ATP hydrolysis. Has a chymotrypsin-like activity. Plays a major role in the degradation of misfolded proteins. The sequence is that of ATP-dependent Clp protease proteolytic subunit from Haemophilus influenzae (strain 86-028NP).